A 356-amino-acid polypeptide reads, in one-letter code: Arginine kinase Lit v 2.0101 (356 aa).

The Phosphagen kinase N-terminal domain maps to 9-91 (KLEAGFKKLE…FDPIIEDYHV (83 aa)). 64–68 (GVGIY) lines the L-arginine pocket. Residues 119-356 (FVISTRVRCG…LELIKIEKEM (238 aa)) enclose the Phosphagen kinase C-terminal domain. Residues 122-126 (STRVR) and histidine 185 contribute to the ATP site. Residue glutamate 225 coordinates L-arginine. Arginine 229 contributes to the ATP binding site. Cysteine 271 contacts L-arginine. ATP contacts are provided by residues 280–284 (RASVH) and 309–314 (RGTRGE). Glutamate 314 serves as a coordination point for L-arginine.

The protein belongs to the ATP:guanido phosphotransferase family. In terms of assembly, monomer. As to expression, muscle (at protein level).

The enzyme catalyses L-arginine + ATP = N(omega)-phospho-L-arginine + ADP + H(+). It carries out the reaction dTDP + ATP = dTTP + ADP. Its function is as follows. Catalyzes the reversible transfer of high energy ATP gamma-phosphate group to L-arginine. Has nucleoside diphosphate kinase-like activity toward dTDP. Binds and phosphorylates dTDP using ATP as a phosphate donor. Does not phosphorylate dADP, dCDP, dGDP, dTMP or thymidine. The sequence is that of Arginine kinase Lit v 2.0101 from Penaeus vannamei (Whiteleg shrimp).